The primary structure comprises 604 residues: Beta-(1--&gt;2)glucan export ATP-binding/permease protein NdvA (604 aa).

The 291-residue stretch at 21–311 (GWILAFANLL…VVSFINSVFM (291 aa)) folds into the ABC transmembrane type-1 domain. Helical transmembrane passes span 22 to 42 (WILA…PVLF), 68 to 88 (LLGA…AVAL), 146 to 166 (EHFA…YINW), 168 to 188 (LAIL…LVVH), 238 to 258 (LLAL…ITRA), and 285 to 305 (IVMF…VVSF). Residues 345 to 579 (VEFKDVSFSY…QGHFAALARA (235 aa)) enclose the ABC transporter domain. Position 378–385 (378–385 (GATGAGKS)) interacts with ATP.

The protein belongs to the ABC transporter superfamily. Beta-(1--&gt;2)glucan exporter (TC 3.A.1.108.1) family. As to quaternary structure, homodimer.

The protein localises to the cell inner membrane. The enzyme catalyses [(1-&gt;2)-beta-D-glucosyl](n)(in) + ATP + H2O = [(1-&gt;2)-beta-D-glucosyl](n)(out) + ADP + phosphate + H(+). In terms of biological role, involved in beta-(1--&gt;2)glucan export. Transmembrane domains (TMD) form a pore in the inner membrane and the ATP-binding domain (NBD) is responsible for energy generation. This chain is Beta-(1--&gt;2)glucan export ATP-binding/permease protein NdvA, found in Rhodopseudomonas palustris (strain BisB18).